Here is a 309-residue protein sequence, read N- to C-terminus: Protein FdhE (309 aa).

This sequence belongs to the FdhE family.

It is found in the cytoplasm. In terms of biological role, necessary for formate dehydrogenase activity. This is Protein FdhE from Salmonella typhimurium (strain LT2 / SGSC1412 / ATCC 700720).